We begin with the raw amino-acid sequence, 215 residues long: Fanconi anemia core complex-associated protein 24 (215 aa).

In terms of assembly, belongs to the multisubunit FA complex composed of FANCA, FANCB, FANCC, FANCE, FANCF, FANCG, FANCL/PHF9, FANCM and FAAP24. Interacts with FANCM.

The protein resides in the nucleus. Plays a role in DNA repair through recruitment of the FA core complex to damaged DNA. Regulates FANCD2 monoubiquitination upon DNA damage. Induces chromosomal instability as well as hypersensitivity to DNA cross-linking agents, when repressed. Targets FANCM/FAAP24 complex to the DNA, preferentially to single strand DNA. This Bos taurus (Bovine) protein is Fanconi anemia core complex-associated protein 24.